A 160-amino-acid polypeptide reads, in one-letter code: MSIMKKPDLSDPKLRAKLAQNMGHNYYGEPAWPNDILFTFPICIAGTIGLITGLAILDPAMIGEPGNPFATPLEILPEWYLYPVFQILRVLPNKLLGIACQGAIPLGLMMVPFIESVNKFQNPFRRPVAMAVFLFGTAVTLWLGAGACFPIDESLTLGLF.

3 consecutive transmembrane segments (helical) span residues 36 to 56, 95 to 115, and 131 to 151; these read ILFTFPICIAGTIGLITGLAI, LLGIACQGAIPLGLMMVPFIE, and AVFLFGTAVTLWLGAGACFPI.

Belongs to the cytochrome b family. PetD subfamily. As to quaternary structure, the 4 large subunits of the cytochrome b6-f complex are cytochrome b6, subunit IV (17 kDa polypeptide, PetD), cytochrome f and the Rieske protein, while the 4 small subunits are PetG, PetL, PetM and PetN. The complex functions as a dimer.

Its subcellular location is the cellular thylakoid membrane. Its function is as follows. Component of the cytochrome b6-f complex, which mediates electron transfer between photosystem II (PSII) and photosystem I (PSI), cyclic electron flow around PSI, and state transitions. This is Cytochrome b6-f complex subunit 4 from Picosynechococcus sp. (strain ATCC 27264 / PCC 7002 / PR-6) (Agmenellum quadruplicatum).